The primary structure comprises 480 residues: Glycogen synthase (480 aa).

K15 provides a ligand contact to ADP-alpha-D-glucose.

Belongs to the glycosyltransferase 1 family. Bacterial/plant glycogen synthase subfamily.

The enzyme catalyses [(1-&gt;4)-alpha-D-glucosyl](n) + ADP-alpha-D-glucose = [(1-&gt;4)-alpha-D-glucosyl](n+1) + ADP + H(+). Its pathway is glycan biosynthesis; glycogen biosynthesis. Functionally, synthesizes alpha-1,4-glucan chains using ADP-glucose. In Granulibacter bethesdensis (strain ATCC BAA-1260 / CGDNIH1), this protein is Glycogen synthase.